A 218-amino-acid chain; its full sequence is Ribulose-phosphate 3-epimerase (218 aa).

Position 10 (S10) interacts with substrate. A divalent metal cation contacts are provided by H35, D37, and H68. The active-site Proton acceptor is D37. Substrate contacts are provided by residues H68, 144–147, 177–179, and 199–200; these read GFSG, DGG, and GS. D177 is an a divalent metal cation binding site. The active-site Proton donor is the D177.

It belongs to the ribulose-phosphate 3-epimerase family. Requires a divalent metal cation as cofactor.

The catalysed reaction is D-ribulose 5-phosphate = D-xylulose 5-phosphate. Its pathway is carbohydrate degradation. Functionally, catalyzes the reversible epimerization of D-ribulose 5-phosphate to D-xylulose 5-phosphate. This Treponema pallidum (strain Nichols) protein is Ribulose-phosphate 3-epimerase.